Reading from the N-terminus, the 248-residue chain is MEELIEENNIKIGVLALQGGFKEHVEMVKSIKHCFSECENKYKYSIIVQEVKSVSDIKKLNPHGIILPGGESTSMAIIASSNNDGENIFTFLKEYIKQGNFIWGTCAGSIMLSNNVDGQKVGGQSLIGGLDVLISRNYFGRQIDSFETKINLNLKFSKNNNNSILLENFEAIFIRAPAILDVIDKENVEIIGEYIVTKKDGTKEKVITAVKQNNIIASVFHPELTNDNRFHQYFVQLVLNNHLIKIKI.

70–72 (GES) serves as a coordination point for L-glutamine. Cysteine 106 (nucleophile) is an active-site residue. L-glutamine contacts are provided by residues arginine 136 and 174–175 (IR). Active-site charge relay system residues include histidine 221 and glutamate 223.

Belongs to the glutaminase PdxT/SNO family.

The enzyme catalyses aldehydo-D-ribose 5-phosphate + D-glyceraldehyde 3-phosphate + L-glutamine = pyridoxal 5'-phosphate + L-glutamate + phosphate + 3 H2O + H(+). It carries out the reaction L-glutamine + H2O = L-glutamate + NH4(+). It functions in the pathway cofactor biosynthesis; pyridoxal 5'-phosphate biosynthesis. Its function is as follows. Catalyzes the hydrolysis of glutamine to glutamate and ammonia as part of the biosynthesis of pyridoxal 5'-phosphate. The resulting ammonia molecule is channeled to the active site of pdx1. This Dictyostelium discoideum (Social amoeba) protein is Probable pyridoxal 5'-phosphate synthase subunit pdx2.